Here is a 221-residue protein sequence, read N- to C-terminus: MRAGQPKITGAKITGAIIAGGQSSRMQAGGVSGDKFLQPLGSAPVIAHVIARLQPQVDTLFINSKGDLSRFAAFGLPAVKDIAMNHGGPLVGLLTCLAHASPCRLLLTSAADTPFLPCDLASNLIRKQAETGARIILACSNERVHPIVGLWHTDLVPDLEKWLQYAEKASIFWFAKHIGFEVVNIPLAHAPRLAESYDPFFNINLPDDLLKAREINEALQA.

GTP-binding positions include 18–20, K35, N63, D81, and D112; that span reads IAG. D112 provides a ligand contact to Mg(2+).

The protein belongs to the MobA family. In terms of assembly, monomer. It depends on Mg(2+) as a cofactor.

It localises to the cytoplasm. The enzyme catalyses Mo-molybdopterin + GTP + H(+) = Mo-molybdopterin guanine dinucleotide + diphosphate. Functionally, transfers a GMP moiety from GTP to Mo-molybdopterin (Mo-MPT) cofactor (Moco or molybdenum cofactor) to form Mo-molybdopterin guanine dinucleotide (Mo-MGD) cofactor. This chain is Molybdenum cofactor guanylyltransferase, found in Brucella melitensis biotype 2 (strain ATCC 23457).